We begin with the raw amino-acid sequence, 95 residues long: Co-chaperonin GroES (95 aa).

Residues K20 to E45 are disordered.

The protein belongs to the GroES chaperonin family. In terms of assembly, heptamer of 7 subunits arranged in a ring. Interacts with the chaperonin GroEL.

The protein localises to the cytoplasm. Functionally, together with the chaperonin GroEL, plays an essential role in assisting protein folding. The GroEL-GroES system forms a nano-cage that allows encapsulation of the non-native substrate proteins and provides a physical environment optimized to promote and accelerate protein folding. GroES binds to the apical surface of the GroEL ring, thereby capping the opening of the GroEL channel. The polypeptide is Co-chaperonin GroES (Paracoccus denitrificans).